The primary structure comprises 496 residues: GTPase Der (496 aa).

EngA-type G domains follow at residues 3–168 and 210–383; these read PIIA…VPEK and IKLA…DCST. Residues 9 to 16, 56 to 60, 120 to 123, 216 to 223, 263 to 267, and 328 to 331 each bind GTP; these read GRPNVGKS, DTGGI, NKID, DTAGV, and NKWD. Residues 384-468 enclose the KH-like domain; sequence KRINTSLLTR…PIRIQFKESE (85 aa).

It belongs to the TRAFAC class TrmE-Era-EngA-EngB-Septin-like GTPase superfamily. EngA (Der) GTPase family. In terms of assembly, associates with the 50S ribosomal subunit.

Its function is as follows. GTPase that plays an essential role in the late steps of ribosome biogenesis. In Hamiltonella defensa subsp. Acyrthosiphon pisum (strain 5AT), this protein is GTPase Der.